The chain runs to 182 residues: ATP synthase subunit delta (182 aa).

This sequence belongs to the ATPase delta chain family. F-type ATPases have 2 components, F(1) - the catalytic core - and F(0) - the membrane proton channel. F(1) has five subunits: alpha(3), beta(3), gamma(1), delta(1), epsilon(1). F(0) has three main subunits: a(1), b(2) and c(10-14). The alpha and beta chains form an alternating ring which encloses part of the gamma chain. F(1) is attached to F(0) by a central stalk formed by the gamma and epsilon chains, while a peripheral stalk is formed by the delta and b chains.

Its subcellular location is the cell membrane. In terms of biological role, f(1)F(0) ATP synthase produces ATP from ADP in the presence of a proton or sodium gradient. F-type ATPases consist of two structural domains, F(1) containing the extramembraneous catalytic core and F(0) containing the membrane proton channel, linked together by a central stalk and a peripheral stalk. During catalysis, ATP synthesis in the catalytic domain of F(1) is coupled via a rotary mechanism of the central stalk subunits to proton translocation. Its function is as follows. This protein is part of the stalk that links CF(0) to CF(1). It either transmits conformational changes from CF(0) to CF(1) or is implicated in proton conduction. This Desulforudis audaxviator (strain MP104C) protein is ATP synthase subunit delta.